We begin with the raw amino-acid sequence, 685 residues long: Stromal interaction molecule 1 (685 aa).

The first 22 residues, 1 to 22 (MDVCVRLALWLLWGLLLHQGQS), serve as a signal peptide directing secretion. Residues 23-213 (LSHSHSEKAT…LLTRHNHLKD (191 aa)) are Extracellular-facing. EF-hand domains follow at residues 64–97 (SFEA…EDLN) and 102–126 (TVKH…AWKS). Ca(2+) is bound by residues D76, D78, N80, D82, and E87. N-linked (GlcNAc...) asparagine glycosylation is found at N131 and N171. In terms of domain architecture, SAM spans 132-200 (WTVDEVVQWL…QLKALDTVLF (69 aa)). A helical transmembrane segment spans residues 214-234 (FMLVVSIVIGVGGCWFAYIQN). The Cytoplasmic segment spans residues 235 to 685 (RYSKEHMKKM…LKIFKKPLKK (451 aa)). A coiled-coil region spans residues 248 to 442 (LEGLHRAEQS…IEILCGFQIV (195 aa)). Residue S257 is modified to Phosphoserine. Residues 344–442 (PEALQKWLQL…IEILCGFQIV (99 aa)) are SOAR/CAD. The tract at residues 475-483 (DDVDDMDEE) is contributes to fast Ca(2+)-dependent inactivation of CRAC channels. Residues 490–499 (MQSPSLQSSV) show a composition bias toward low complexity. Residues 490–542 (MQSPSLQSSVRQRLTEPQHGLGSQRDLTHSDSESSLHMSDRQRVAPKPPQMSR) form a disordered region. At T504 the chain carries Phosphothreonine. S512 is subject to Phosphoserine. The span at 515–532 (DLTHSDSESSLHMSDRQR) shows a compositional bias: basic and acidic residues. T517 is subject to Phosphothreonine. A phosphoserine mark is found at S519, S521, S523, S524, S567, S575, S602, S608, S618, S621, and S628. Residues 596 to 685 (LMELSPSAPP…LKIFKKPLKK (90 aa)) form a disordered region. Residues 608-620 (SPHLDSSRSHSPS) are compositionally biased toward low complexity. A Microtubule tip localization signal motif is present at residues 642-645 (TRIP). Residues 655-666 (EEDNGSIGEETD) are compositionally biased toward acidic residues. S660 carries the phosphoserine modification. T665 bears the Phosphothreonine mark. Phosphoserine is present on S668. Over residues 670–685 (GRKKFPLKIFKKPLKK) the composition is skewed to basic residues. The tract at residues 672–685 (KKFPLKIFKKPLKK) is required for generation of inwardly rectifying CRAC currents.

In terms of assembly, monomer in the presence of Ca(2+); it oligomerizes in absence of Ca(2+). Forms homooligomers and heterooligomers with STIM2. Interacts with pore-forming subunits of CRAC channels, ORAI1, ORAI2 and ORAI3; this interaction is potentiated upon Ca(2+) store depletion. Interacts (via the transmembrane region and the SOAR/CAD domain) with SPPL3; the interaction promotes the binding of STIM1 to ORAI1. Interacts (via the SOAR/CAD domain) with ORAI1. Interacts with MAPRE1; probably required for targeting to the growing microtubule plus ends. Interacts with CRACR2A/EFCAB4B; the interaction is direct and takes place in absence of Ca(2+). Forms a complex with CRACR2A/EFCAB4B and ORAI1 at low concentration of Ca(2+), the complex dissociates at elevated Ca(2+) concentrations. Interacts with SARAF, promoting a slow inactivation of STIM1-dependent SOCE activity, possibly by facilitating the deoligomerization of STIM1. Interacts with EFHB; the interaction takes place upon Ca(2+)-store depletion and inhibits the association with SARAF. Interacts with ASPH (isoform 8). Interacts with SLC35G1; intracellular Ca(2+)-dependent. May interact with ATP1A1, ATP2A2, ATP2B1, ATP2B4, KPNB1 and XPO1; through SLC35G1. Interacts with TMEM203. Interacts with STIMATE, promoting STIM1 conformational switch. Interacts with TMEM178A. Interacts with CASQ1 (via C-terminal end and preferentially with the monomeric form); this interaction increases in response to a depletion of intracellular Ca(2+), decreases both STIM1 aggregation and clustering, interaction of STIM1 with ORAI1 and store-operated Ca(2+) entry (SOCE) activity. Interacts with ADCY8. Post-translationally, glycosylation is required for cell surface expression. Phosphorylated predominantly on Ser residues. Ubiquitously expressed in various human primary cells and tumor cell lines.

It localises to the cell membrane. The protein resides in the endoplasmic reticulum membrane. It is found in the cytoplasm. The protein localises to the cytoskeleton. Its subcellular location is the sarcoplasmic reticulum. Functionally, acts as a Ca(2+) sensor that gates two major inward rectifying Ca(2+) channels at the plasma membrane: Ca(2+) release-activated Ca(2+) (CRAC) channels and arachidonate-regulated Ca(2+)-selective (ARC) channels. Plays a role in mediating store-operated Ca(2+) entry (SOCE), a Ca(2+) influx following depletion of intracellular Ca(2+) stores. Upon Ca(2+) depletion, translocates from the endoplasmic reticulum to the plasma membrane where it activates CRAC channel pore-forming subunits ORA1, ORA2 and ORAI3 to generate sustained and oscillatory Ca(2+) entry. Involved in enamel formation. This Homo sapiens (Human) protein is Stromal interaction molecule 1 (STIM1).